Reading from the N-terminus, the 793-residue chain is Probable phosphoketolase (793 aa).

This sequence belongs to the XFP family. Requires thiamine diphosphate as cofactor.

The polypeptide is Probable phosphoketolase (Gloeobacter violaceus (strain ATCC 29082 / PCC 7421)).